We begin with the raw amino-acid sequence, 113 residues long: Ribonuclease P protein component (113 aa).

The protein belongs to the RnpA family. In terms of assembly, consists of a catalytic RNA component (M1 or rnpB) and a protein subunit.

The enzyme catalyses Endonucleolytic cleavage of RNA, removing 5'-extranucleotides from tRNA precursor.. Its function is as follows. RNaseP catalyzes the removal of the 5'-leader sequence from pre-tRNA to produce the mature 5'-terminus. It can also cleave other RNA substrates such as 4.5S RNA. The protein component plays an auxiliary but essential role in vivo by binding to the 5'-leader sequence and broadening the substrate specificity of the ribozyme. This chain is Ribonuclease P protein component, found in Ureaplasma parvum serovar 3 (strain ATCC 27815 / 27 / NCTC 11736).